We begin with the raw amino-acid sequence, 967 residues long: Alanine--tRNA ligase, cytoplasmic (967 aa).

Zn(2+) is bound by residues His605, His609, Cys724, and His728.

This sequence belongs to the class-II aminoacyl-tRNA synthetase family. In terms of assembly, monomer. It depends on Zn(2+) as a cofactor. The N-terminus is blocked.

The protein localises to the cytoplasm. The enzyme catalyses tRNA(Ala) + L-alanine + ATP = L-alanyl-tRNA(Ala) + AMP + diphosphate. Catalyzes the attachment of alanine to tRNA(Ala) in a two-step reaction: alanine is first activated by ATP to form Ala-AMP and then transferred to the acceptor end of tRNA(Ala). Also edits incorrectly charged tRNA(Ala) via its editing domain. In Bombyx mori (Silk moth), this protein is Alanine--tRNA ligase, cytoplasmic.